The following is a 335-amino-acid chain: Methionine import ATP-binding protein MetN 1 (335 aa).

The region spanning 2–242 is the ABC transporter domain; the sequence is IEFQNVHKTY…PKHPTTKRFV (241 aa). 38 to 45 serves as a coordination point for ATP; it reads GHSGAGKS.

This sequence belongs to the ABC transporter superfamily. Methionine importer (TC 3.A.1.24) family. As to quaternary structure, the complex is composed of two ATP-binding proteins (MetN), two transmembrane proteins (MetI) and a solute-binding protein (MetQ).

The protein localises to the cell inner membrane. The enzyme catalyses L-methionine(out) + ATP + H2O = L-methionine(in) + ADP + phosphate + H(+). It carries out the reaction D-methionine(out) + ATP + H2O = D-methionine(in) + ADP + phosphate + H(+). Part of the ABC transporter complex MetNIQ involved in methionine import. Responsible for energy coupling to the transport system. The chain is Methionine import ATP-binding protein MetN 1 from Pseudomonas fluorescens (strain Pf0-1).